We begin with the raw amino-acid sequence, 81 residues long: Large ribosomal subunit protein bL31B (81 aa).

It belongs to the bacterial ribosomal protein bL31 family. Type B subfamily. In terms of assembly, part of the 50S ribosomal subunit.

The sequence is that of Large ribosomal subunit protein bL31B (rpmE2) from Lactiplantibacillus plantarum (strain ATCC BAA-793 / NCIMB 8826 / WCFS1) (Lactobacillus plantarum).